The chain runs to 200 residues: Recombination protein RecR (200 aa).

Residues 57–72 (CRQCRTLTEQELCPQC) form a C4-type zinc finger. The 96-residue stretch at 80–175 (TQLCVVEGPM…VASRIAHGVP (96 aa)) folds into the Toprim domain.

This sequence belongs to the RecR family.

In terms of biological role, may play a role in DNA repair. It seems to be involved in an RecBC-independent recombinational process of DNA repair. It may act with RecF and RecO. This Pseudomonas putida (strain W619) protein is Recombination protein RecR.